The sequence spans 70 residues: Brevinin-1MT2 (70 aa).

The signal sequence occupies residues 1 to 22 (MFTLKKSMLLLFFLGTINLSLC). Positions 23–44 (EQERNADEEERRDDDEMDVEVE) are excised as a propeptide. A disulfide bond links cysteine 64 and cysteine 70.

This sequence belongs to the frog skin active peptide (FSAP) family. Brevinin subfamily. Expressed by the skin glands.

The protein resides in the secreted. Antimicrobial peptide with activity against a variety of Gram-negative and Gram-positive bacteria and against fungi. Shows strong hemolytic activity against human erythrocytes. This chain is Brevinin-1MT2, found in Amolops mantzorum (Sichuan torrent frog).